The sequence spans 76 residues: Putative membrane protein insertion efficiency factor (76 aa).

The protein belongs to the UPF0161 family.

The protein localises to the cell inner membrane. Could be involved in insertion of integral membrane proteins into the membrane. In Porphyromonas gingivalis (strain ATCC 33277 / DSM 20709 / CIP 103683 / JCM 12257 / NCTC 11834 / 2561), this protein is Putative membrane protein insertion efficiency factor.